A 287-amino-acid polypeptide reads, in one-letter code: Probable 3-hydroxybutyryl-CoA dehydrogenase (287 aa).

Belongs to the 3-hydroxyacyl-CoA dehydrogenase family.

The catalysed reaction is (3S)-3-hydroxybutanoyl-CoA + NADP(+) = acetoacetyl-CoA + NADPH + H(+). It participates in lipid metabolism; butanoate metabolism. This chain is Probable 3-hydroxybutyryl-CoA dehydrogenase (mmgB), found in Bacillus subtilis (strain 168).